The following is a 231-amino-acid chain: Aldehyde decarbonylase (231 aa).

Fe cation is bound by residues E32, E60, H63, E115, and H147.

The protein belongs to the aldehyde decarbonylase family. The cofactor is Binds 2 metal cations per subunit. The catalytic dinuclear metal-binding site could be either a di-iron or a manganese-iron cofactor..

It catalyses the reaction a long-chain fatty aldehyde + 2 NADPH + O2 + H(+) = a long-chain alkane + formate + 2 NADP(+) + H2O. Functionally, catalyzes the decarbonylation of fatty aldehydes to alkanes. Requires the presence of ferredoxin, ferredoxin reductase and NADPH for in vitro decarbonylase activity. Involved in the biosynthesis of alkanes, mainly heptadecane and pentadecane. This chain is Aldehyde decarbonylase, found in Synechocystis sp. (strain ATCC 27184 / PCC 6803 / Kazusa).